Reading from the N-terminus, the 430-residue chain is Replication protein A 32 kDa subunit C (430 aa).

The segment at 14–46 (MPSQRSGAPAPEYSAAGTGAAAAPSPSKPRDPR) is disordered. Over residues 23 to 38 (APEYSAAGTGAAAAPS) the composition is skewed to low complexity. Positions 86-160 (VRVLGRVVSV…QGLARSIRPI (75 aa)) form a DNA-binding region, OB.

The protein belongs to the replication factor A protein 2 family. Heterotrimer of RPA1, RPA2 and RPA3 (canonical replication protein A complex). Interacts with RPA1C and RPA3. Phosphorylated in a cell-cycle-dependent manner (from the S phase until mitosis). In response to DNA damage, recruited to DNA-repair nuclear foci, as a hypophosphorylated form.

It is found in the nucleus. Its function is as follows. Component of the replication protein A complex (RPA) required for DNA recombination, repair and replication. The activity of RPA is mediated by single-stranded DNA binding and protein interactions. This Oryza sativa subsp. japonica (Rice) protein is Replication protein A 32 kDa subunit C (RPA2C).